The primary structure comprises 112 residues: Small ribosomal subunit protein bS16 (112 aa).

It belongs to the bacterial ribosomal protein bS16 family.

The chain is Small ribosomal subunit protein bS16 from Aquifex aeolicus (strain VF5).